The primary structure comprises 67 residues: Surface composition regulator (67 aa).

This sequence belongs to the GlgS family.

Its function is as follows. Major determinant of cell surface composition. Negatively regulates motility, adhesion and synthesis of biofilm exopolysaccharides. The polypeptide is Surface composition regulator (Salmonella enteritidis PT4 (strain P125109)).